The chain runs to 22 residues: Caerin-3.4 (22 aa).

Lysine 22 is subject to Lysine amide.

Expressed by the skin parotoid and/or rostral glands.

Its subcellular location is the secreted. Its function is as follows. Antibacterial peptide, that adopts an alpha helical conformation which can disrupt bacterial membranes. Each caerin displays a different antimicrobial specificity. The protein is Caerin-3.4 of Ranoidea caerulea (Green tree frog).